The primary structure comprises 135 residues: Small ribosomal subunit protein uS12 (135 aa).

The tract at residues 1 to 24 (MPTINQLVRKGRHSKTTKSKSPAL) is disordered. The segment covering 9–18 (RKGRHSKTTK) has biased composition (basic residues). The residue at position 102 (Asp-102) is a 3-methylthioaspartic acid.

It belongs to the universal ribosomal protein uS12 family. As to quaternary structure, part of the 30S ribosomal subunit. Contacts proteins S8 and S17. May interact with IF1 in the 30S initiation complex.

Functionally, with S4 and S5 plays an important role in translational accuracy. Interacts with and stabilizes bases of the 16S rRNA that are involved in tRNA selection in the A site and with the mRNA backbone. Located at the interface of the 30S and 50S subunits, it traverses the body of the 30S subunit contacting proteins on the other side and probably holding the rRNA structure together. The combined cluster of proteins S8, S12 and S17 appears to hold together the shoulder and platform of the 30S subunit. This Lactobacillus delbrueckii subsp. bulgaricus (strain ATCC 11842 / DSM 20081 / BCRC 10696 / JCM 1002 / NBRC 13953 / NCIMB 11778 / NCTC 12712 / WDCM 00102 / Lb 14) protein is Small ribosomal subunit protein uS12.